Here is a 613-residue protein sequence, read N- to C-terminus: Proteasome-associated ATPase (613 aa).

Positions 1–29 (MSESERSEGFPEGFAGAGSGSLSSEDAAE) are disordered. Positions 23–100 (SSEDAAELEA…LREEVDRLGQ (78 aa)) form a coiled coil. Residue 300–305 (GCGKTL) participates in ATP binding. Lys595 participates in a covalent cross-link: Isoglutamyl lysine isopeptide (Lys-Gln) (interchain with Q-Cter in protein Pup). A docks into pockets in the proteasome alpha-ring region spans residues 612-613 (YL).

It belongs to the AAA ATPase family. As to quaternary structure, homohexamer. Assembles into a hexameric ring structure that caps the 20S proteasome core. Strongly interacts with the prokaryotic ubiquitin-like protein Pup through a hydrophobic interface; the interacting region of ARC lies in its N-terminal coiled-coil domain. There is one Pup binding site per ARC hexamer ring. Upon ATP-binding, the C-terminus of ARC interacts with the alpha-rings of the proteasome core, possibly by binding to the intersubunit pockets.

It participates in protein degradation; proteasomal Pup-dependent pathway. In terms of biological role, ATPase which is responsible for recognizing, binding, unfolding and translocation of pupylated proteins into the bacterial 20S proteasome core particle. May be essential for opening the gate of the 20S proteasome via an interaction with its C-terminus, thereby allowing substrate entry and access to the site of proteolysis. Thus, the C-termini of the proteasomal ATPase may function like a 'key in a lock' to induce gate opening and therefore regulate proteolysis. This chain is Proteasome-associated ATPase, found in Mycolicibacterium smegmatis (strain ATCC 700084 / mc(2)155) (Mycobacterium smegmatis).